A 466-amino-acid chain; its full sequence is Voltage-gated potassium channel regulatory subunit KCNG2 (466 aa).

Over 1–174 (MEPWPCSPGG…DVVDNPHSGL (174 aa)) the chain is Cytoplasmic. Residues 131 to 155 (AEARAGPTERGAQGSPARALGPRGR) are disordered. The helical transmembrane segment at 175 to 196 (AGKLFACVSVSFVAVTAVGLCL) threads the bilayer. Residues 197-217 (STMPDIRAEEERGECSPKCRS) lie on the Extracellular side of the membrane. The helical transmembrane segment at 218–239 (LFVLETVCVAWFSFEFLLRSLQ) threads the bilayer. Topologically, residues 240-250 (AESKCAFLRAP) are cytoplasmic. The chain crosses the membrane as a helical span at residues 251-271 (LNIIDILALLPFYVSLLLGLA). Residues 272 to 283 (AGPGGTKLLERA) lie on the Extracellular side of the membrane. The chain crosses the membrane as a helical; Voltage-sensor span at residues 284 to 304 (GLVLRLLRALRVLYVMRLARH). Residues 305–319 (SLGLRSLGLTMRRCA) lie on the Cytoplasmic side of the membrane. The helical transmembrane segment at 320–341 (REFGLLLLFLCVAMALFAPLVH) threads the bilayer. Topologically, residues 342 to 356 (LAERELGARRDFSSV) are extracellular. The segment at residues 357–368 (PASYWWAVISMT) is an intramembrane region (helical). The Selectivity filter motif lies at 369–374 (TVGYGD). Residues 369 to 376 (TVGYGDMV) lie within the membrane without spanning it. The Extracellular portion of the chain corresponds to 377-383 (PRSLPGQ). The chain crosses the membrane as a helical span at residues 384-412 (VVALSSILSGILLMAFPVTSIFHTFSRSY). Residues 413–466 (SELKEQQQRAASPEPALQEDSTHSATATEDSSQGPDSAGLADDSADALWVRAGR) are Cytoplasmic-facing. Residues 416–466 (KEQQQRAASPEPALQEDSTHSATATEDSSQGPDSAGLADDSADALWVRAGR) form a disordered region. Over residues 435–447 (HSATATEDSSQGP) the composition is skewed to polar residues. Positions 448–460 (DSAGLADDSADAL) are enriched in low complexity.

It belongs to the potassium channel family. G (TC 1.A.1.2) subfamily. Kv6.2/KCNG2 sub-subfamily. In terms of assembly, heterodimer with KCNB1. As to expression, highly expressed in heart, liver, skeletal muscle, kidney and pancreas. Detected at low levels in brain, lung and placenta.

It is found in the cell membrane. Functionally, regulatory alpha-subunit of the voltage-gated potassium (Kv) channel which, when coassembled with KCNB1, can modulate the kinetics and conductance-voltage relationship. Modulates channel activity by shifting the threshold and the half-maximal activation to more negative values. Potassium channel subunit that does not form functional channels by itself. The chain is Voltage-gated potassium channel regulatory subunit KCNG2 from Homo sapiens (Human).